We begin with the raw amino-acid sequence, 382 residues long: ATP phosphoribosyltransferase regulatory subunit (382 aa).

Belongs to the class-II aminoacyl-tRNA synthetase family. HisZ subfamily. As to quaternary structure, heteromultimer composed of HisG and HisZ subunits.

It localises to the cytoplasm. It participates in amino-acid biosynthesis; L-histidine biosynthesis; L-histidine from 5-phospho-alpha-D-ribose 1-diphosphate: step 1/9. In terms of biological role, required for the first step of histidine biosynthesis. May allow the feedback regulation of ATP phosphoribosyltransferase activity by histidine. The sequence is that of ATP phosphoribosyltransferase regulatory subunit from Burkholderia cenocepacia (strain ATCC BAA-245 / DSM 16553 / LMG 16656 / NCTC 13227 / J2315 / CF5610) (Burkholderia cepacia (strain J2315)).